We begin with the raw amino-acid sequence, 702 residues long: K(+)-insensitive pyrophosphate-energized proton pump (702 aa).

Helical transmembrane passes span 3-23 (GIYLFVVAAALAALGYGALTI), 63-83 (AVVFVILTALLGISVGFGFLI), 130-150 (MLVAGLALLSVAFYYILLVGI), and 162-182 (VALGFGASLISIFARLGGGIF). Lys184 contributes to the substrate binding site. The Mg(2+) site is built by Asp187, Asp191, Asn214, and Asp217. 6 helical membrane passes run 234-254 (AVTVVATMVLASIFFAGVPAM), 255-275 (TSMMAYPLAIGGVCILASILG), 294-314 (GFLVSAGASFVGIILATAIVP), 329-349 (GFDLFLCAVIGLLVTGLLIWV), 379-399 (GLAISMEATALPALIICAAII), and 407-427 (LFGIAITVTSMLALAGMVVAL). Residue Asp435 participates in Mg(2+) binding. The next 4 membrane-spanning stretches (helical) occupy residues 466–486 (AVTKGYAIGSAGLGALVLFAA), 517–537 (YVVVGLFIGGLLPYLFGSMGM), 586–606 (IIPSLLPVLAPIVLYFVILGI), and 612–632 (AFSALGAMLLGVIVTGLFVAI). Ca(2+) is bound by residues Asp642, Asp668, and Asp672. Residue Lys675 coordinates substrate.

Belongs to the H(+)-translocating pyrophosphatase (TC 3.A.10) family. K(+)-insensitive subfamily. As to quaternary structure, homodimer. It depends on Mg(2+) as a cofactor.

It is found in the cell inner membrane. The catalysed reaction is diphosphate + H2O + H(+)(in) = 2 phosphate + 2 H(+)(out). Functionally, proton pump that utilizes the energy of pyrophosphate hydrolysis as the driving force for proton movement across the membrane. Generates a proton motive force. The chain is K(+)-insensitive pyrophosphate-energized proton pump from Rhodospirillum rubrum (strain ATCC 11170 / ATH 1.1.1 / DSM 467 / LMG 4362 / NCIMB 8255 / S1).